A 239-amino-acid chain; its full sequence is Ribosomal RNA small subunit methyltransferase G (239 aa).

S-adenosyl-L-methionine is bound by residues Gly78, Phe83, 129-130 (AE), and Arg148.

The protein belongs to the methyltransferase superfamily. RNA methyltransferase RsmG family.

Its subcellular location is the cytoplasm. Its function is as follows. Specifically methylates the N7 position of a guanine in 16S rRNA. The protein is Ribosomal RNA small subunit methyltransferase G of Alkaliphilus metalliredigens (strain QYMF).